A 208-amino-acid polypeptide reads, in one-letter code: Potassium-transporting ATPase KdpC subunit (208 aa).

Residues 6–26 (PALLVSIVLLVVCGLVYPLVL) form a helical membrane-spanning segment.

This sequence belongs to the KdpC family. As to quaternary structure, the system is composed of three essential subunits: KdpA, KdpB and KdpC.

The protein resides in the cell membrane. Part of the high-affinity ATP-driven potassium transport (or Kdp) system, which catalyzes the hydrolysis of ATP coupled with the electrogenic transport of potassium into the cytoplasm. This subunit acts as a catalytic chaperone that increases the ATP-binding affinity of the ATP-hydrolyzing subunit KdpB by the formation of a transient KdpB/KdpC/ATP ternary complex. The sequence is that of Potassium-transporting ATPase KdpC subunit from Clostridioides difficile (strain 630) (Peptoclostridium difficile).